We begin with the raw amino-acid sequence, 119 residues long: UPF0738 protein BAA_1286 (119 aa).

This sequence belongs to the UPF0738 family.

The chain is UPF0738 protein BAA_1286 from Bacillus anthracis (strain A0248).